The chain runs to 417 residues: Methyltransferase/ribosomally synthesized cyclic peptide dendrothelin A precursor dbihMA (417 aa).

Residues 1–251 (MESSTQTKPG…GVSTFYIPPK (251 aa)) are methyltransferase domain. Active-site residues include Arg-72, Tyr-76, and Tyr-98. The S-adenosyl-L-methionine site is built by Tyr-98, His-100, Val-103, Ala-130, Gln-172, Ala-213, Ser-244, and Thr-245. Residues 252-378 (ARKDINTDII…WAIRCAMKNM (127 aa)) form a clasp domain region. Positions 379 to 399 (PSSLLEAASQSVEEASMNGFP) are precursor leader. Val-401 and Val-403 each carry N-methylvaline. Position 404 is an N-methylthreonine (Thr-404). Position 405 is an N-methylglycine (Gly-405). Ile-406 is subject to N-methylisoleucine. Val-407 carries the N-methylvaline modification. Gly-408 is modified (N-methylglycine). Ile-410 bears the N-methylisoleucine mark. Position 411 is an N-methylglycine (Gly-411). Position 413 is an N-methylvaline (Val-413).

In the N-terminal section; belongs to the precorrin methyltransferase family. Homodimer. DbiMA automethylates at Val-401, Val-403, Thr-404, Gly-405, Ile-406, Val-407, Gly-408, Ile-410, Gly-411 and Val-413 before being processed by the prolyloligopeptidase dbiP which likely forms a peptidyl ester upon removal of the follower propeptide, which then undergoes macrocyclization with the N-terminus of the modified core peptide. Peptide backbone alpha-N-methylations change the physicochemical properties of amide bonds to provide structural constraints and other favorable characteristics including biological membrane permeability to peptides.

Its pathway is mycotoxin biosynthesis. Its function is as follows. Fusion protein of the methyltransferase dbiM and the dendrothelin core peptide; part of the gene cluster that mediates the biosynthesis of dendrothelin A, a highly methylated cyclic dodecapeptide showing slight nematodicidal activity. Dendrothelin A derives from the C-terminus of the dbiMA protein, and it is the dbiMA protein that methylates its own C-terminus using S-adenosyl methionine (SAM). The C-terminus is subsequently cleaved off and macrocyclized by the prolyloligopeptidase dbiP to give the final product. The polypeptide is Methyltransferase/ribosomally synthesized cyclic peptide dendrothelin A precursor dbihMA (Dendrothele bispora (strain CBS 962.96)).